Consider the following 129-residue polypeptide: Glycine cleavage system H protein (129 aa).

The Lipoyl-binding domain occupies 24-106; the sequence is SYTVGITEHA…YGEGWFFRVM (83 aa). Lysine 65 carries the N6-lipoyllysine modification.

This sequence belongs to the GcvH family. The glycine cleavage system is composed of four proteins: P, T, L and H. Requires (R)-lipoate as cofactor.

Functionally, the glycine cleavage system catalyzes the degradation of glycine. The H protein shuttles the methylamine group of glycine from the P protein to the T protein. The polypeptide is Glycine cleavage system H protein (Shewanella baltica (strain OS185)).